We begin with the raw amino-acid sequence, 116 residues long: Large ribosomal subunit protein bL19 (116 aa).

The protein belongs to the bacterial ribosomal protein bL19 family.

Functionally, this protein is located at the 30S-50S ribosomal subunit interface and may play a role in the structure and function of the aminoacyl-tRNA binding site. The sequence is that of Large ribosomal subunit protein bL19 from Actinobacillus pleuropneumoniae serotype 5b (strain L20).